The chain runs to 192 residues: MADGEVENKLRDVIERKILDARRVFFSEPVTDKSAADAIKKLWYLELTNPGQPIVFVINSPGGSVDAGFAVWDQIKMMTSPVTTVVTGLAASMGSVLSLCAAPGRRFATPHSRIMIHQPSIGGPITGQATDLDIHAREILKTKKRIVDVYLEATGQSREVIEKAIDRDTWMTADEAKDFGLLDGILFSFNDL.

The active-site Nucleophile is the serine 92. Histidine 117 is an active-site residue.

It belongs to the peptidase S14 family. Fourteen ClpP subunits assemble into 2 heptameric rings which stack back to back to give a disk-like structure with a central cavity, resembling the structure of eukaryotic proteasomes.

The protein localises to the cytoplasm. It catalyses the reaction Hydrolysis of proteins to small peptides in the presence of ATP and magnesium. alpha-casein is the usual test substrate. In the absence of ATP, only oligopeptides shorter than five residues are hydrolyzed (such as succinyl-Leu-Tyr-|-NHMec, and Leu-Tyr-Leu-|-Tyr-Trp, in which cleavage of the -Tyr-|-Leu- and -Tyr-|-Trp bonds also occurs).. In terms of biological role, cleaves peptides in various proteins in a process that requires ATP hydrolysis. Has a chymotrypsin-like activity. Plays a major role in the degradation of misfolded proteins. In Chlamydia abortus (strain DSM 27085 / S26/3) (Chlamydophila abortus), this protein is ATP-dependent Clp protease proteolytic subunit 1.